Consider the following 347-residue polypeptide: NADH-quinone oxidoreductase subunit H (347 aa).

9 helical membrane passes run 13–33, 50–70, 82–102, 115–135, 161–181, 198–218, 248–268, 286–306, and 321–341; these read LLILLKSVALIVILLVGVAYI, PNVVGPWGLFQAFADLFKFVF, GVFLLAPVVAAGLALAAWAVI, VGILYVFAIASLEVYGVIMAG, IGFVIVTVLLAVGSLNLTDIV, FLDWHWLALFPMFIIFFISAL, FLLFFLGEYVAIVLMCALTTI, VPGVVWFVLKLVAVFFMFALV, and LGWKVFLPISLFMVVATAAFL.

Belongs to the complex I subunit 1 family. In terms of assembly, NDH-1 is composed of 14 different subunits. Subunits NuoA, H, J, K, L, M, N constitute the membrane sector of the complex.

The protein localises to the cell inner membrane. The catalysed reaction is a quinone + NADH + 5 H(+)(in) = a quinol + NAD(+) + 4 H(+)(out). Functionally, NDH-1 shuttles electrons from NADH, via FMN and iron-sulfur (Fe-S) centers, to quinones in the respiratory chain. The immediate electron acceptor for the enzyme in this species is believed to be ubiquinone. Couples the redox reaction to proton translocation (for every two electrons transferred, four hydrogen ions are translocated across the cytoplasmic membrane), and thus conserves the redox energy in a proton gradient. This subunit may bind ubiquinone. This Chelativorans sp. (strain BNC1) protein is NADH-quinone oxidoreductase subunit H.